The chain runs to 1153 residues: uncharacterized protein (1153 aa).

Positions methionine 1–glycine 18 are cleaved as a signal peptide. Residue cysteine 19 is the site of N-palmitoyl cysteine attachment. The S-diacylglycerol cysteine moiety is linked to residue cysteine 19. Transmembrane regions (helical) follow at residues valine 289–isoleucine 309, leucine 393–phenylalanine 413, alanine 422–phenylalanine 442, and isoleucine 457–isoleucine 477.

Belongs to the TrbL/VirB6 family.

The protein resides in the cell membrane. This is an uncharacterized protein from Rickettsia conorii (strain ATCC VR-613 / Malish 7).